We begin with the raw amino-acid sequence, 313 residues long: Methionyl-tRNA formyltransferase (313 aa).

113–116 (SLLP) is a binding site for (6S)-5,6,7,8-tetrahydrofolate.

Belongs to the Fmt family.

It carries out the reaction L-methionyl-tRNA(fMet) + (6R)-10-formyltetrahydrofolate = N-formyl-L-methionyl-tRNA(fMet) + (6S)-5,6,7,8-tetrahydrofolate + H(+). Attaches a formyl group to the free amino group of methionyl-tRNA(fMet). The formyl group appears to play a dual role in the initiator identity of N-formylmethionyl-tRNA by promoting its recognition by IF2 and preventing the misappropriation of this tRNA by the elongation apparatus. This is Methionyl-tRNA formyltransferase from Acidithiobacillus ferrooxidans (strain ATCC 23270 / DSM 14882 / CIP 104768 / NCIMB 8455) (Ferrobacillus ferrooxidans (strain ATCC 23270)).